We begin with the raw amino-acid sequence, 406 residues long: Tryptophan synthase beta chain (406 aa).

Lysine 99 carries the post-translational modification N6-(pyridoxal phosphate)lysine.

It belongs to the TrpB family. Tetramer of two alpha and two beta chains. Pyridoxal 5'-phosphate serves as cofactor.

It carries out the reaction (1S,2R)-1-C-(indol-3-yl)glycerol 3-phosphate + L-serine = D-glyceraldehyde 3-phosphate + L-tryptophan + H2O. It functions in the pathway amino-acid biosynthesis; L-tryptophan biosynthesis; L-tryptophan from chorismate: step 5/5. In terms of biological role, the beta subunit is responsible for the synthesis of L-tryptophan from indole and L-serine. The sequence is that of Tryptophan synthase beta chain from Rhizobium etli (strain CIAT 652).